Here is a 360-residue protein sequence, read N- to C-terminus: Histidinol-phosphate aminotransferase (360 aa).

Lysine 224 is modified (N6-(pyridoxal phosphate)lysine).

This sequence belongs to the class-II pyridoxal-phosphate-dependent aminotransferase family. Histidinol-phosphate aminotransferase subfamily. Pyridoxal 5'-phosphate serves as cofactor.

The catalysed reaction is L-histidinol phosphate + 2-oxoglutarate = 3-(imidazol-4-yl)-2-oxopropyl phosphate + L-glutamate. It participates in amino-acid biosynthesis; L-histidine biosynthesis; L-histidine from 5-phospho-alpha-D-ribose 1-diphosphate: step 7/9. This chain is Histidinol-phosphate aminotransferase, found in Methanococcoides burtonii (strain DSM 6242 / NBRC 107633 / OCM 468 / ACE-M).